Reading from the N-terminus, the 100-residue chain is Integration host factor subunit alpha (100 aa).

Positions 54–73 (DLRDKRQRPGRNPKTGEEIP) are disordered.

It belongs to the bacterial histone-like protein family. Heterodimer of an alpha and a beta chain.

Functionally, this protein is one of the two subunits of integration host factor, a specific DNA-binding protein that functions in genetic recombination as well as in transcriptional and translational control. The chain is Integration host factor subunit alpha from Pseudomonas aeruginosa (strain UCBPP-PA14).